The following is an 872-amino-acid chain: DNA mismatch repair protein MutS (872 aa).

Residue 622–629 (GPNMAGKS) coordinates ATP.

This sequence belongs to the DNA mismatch repair MutS family.

Functionally, this protein is involved in the repair of mismatches in DNA. It is possible that it carries out the mismatch recognition step. This protein has a weak ATPase activity. The protein is DNA mismatch repair protein MutS of Geotalea uraniireducens (strain Rf4) (Geobacter uraniireducens).